The chain runs to 162 residues: Proepiregulin (162 aa).

A signal peptide spans Met1 to Ala22. The propeptide occupies Val23–Gln55. An N-linked (GlcNAc...) asparagine glycan is attached at Asn40. The EGF-like domain maps to Leu57–Glu97. 3 disulfides stabilise this stretch: Cys61-Cys74, Cys69-Cys85, and Cys87-Cys96. The propeptide at Thr102–Val162 is removed in mature form. The helical transmembrane segment at Ala113–Phe133 threads the bilayer.

In terms of assembly, interacts with EGFR and ERBB4.

The protein resides in the secreted. The protein localises to the extracellular space. Its subcellular location is the cell membrane. Its function is as follows. Ligand of the EGF receptor/EGFR and ERBB4. Stimulates EGFR and ERBB4 tyrosine phosphorylation. Contributes to inflammation, wound healing, tissue repair, and oocyte maturation by regulating angiogenesis and vascular remodeling and by stimulating cell proliferation. This Rattus norvegicus (Rat) protein is Proepiregulin (Ereg).